The sequence spans 978 residues: Mineralocorticoid receptor (978 aa).

Residues 1–602 form a modulating region; sequence METKGYHSLP…STGSSRPSKI (602 aa). The segment covering 234-243 has biased composition (polar residues); that stretch reads SLTCSPSVEN. Disordered regions lie at residues 234-331 and 353-372; these read SLTC…STVG and GAIQ…AHDV. Phosphoserine is present on residues S250, S259, S283, S287, and S299. Positions 259 to 300 are enriched in low complexity; that stretch reads SPLSSPLSSMKSPISSPPSHCSVKSPVSSPNNVPLRSSVSSP. Residues 301–331 are compositionally biased toward polar residues; sequence ANLNNSRCSVSSPSNTNNRSTLSSPTASTVG. Zn(2+) contacts are provided by C603, C606, C620, C623, C637, C643, C653, and C656. 2 NR C4-type zinc fingers span residues 603-623 and 637-661; these read CLVC…CGSC and CAGR…LQKC. A DNA-binding region (nuclear receptor) is located at residues 603–666; it reads CLVCGDEASG…RLQKCLQAGM (64 aa). The hinge stretch occupies residues 667–719; that stretch reads NLGARKSKKLGKLKGLHEEQPQQPPPPPPQSPEEGTTYIAPTKEPSVNSALVP. A disordered region spans residues 681 to 706; the sequence is GLHEEQPQQPPPPPPQSPEEGTTYIA. Residues 688–697 are compositionally biased toward pro residues; it reads QQPPPPPPQS. Positions 720–958 constitute an NR LBD domain; the sequence is QLASITRALT…EFPAMLVEII (239 aa). 21-hydroxyprogesterone-binding residues include N764 and Q770. N764 and Q770 together coordinate aldosterone. Positions 764 and 770 each coordinate progesterone. The important for coactivator binding stretch occupies residues 776–779; that stretch reads KWAK. 2 residues coordinate 21-hydroxyprogesterone: R811 and T939. Aldosterone contacts are provided by R811 and T939. Residues R811 and T939 each contribute to the progesterone site.

It belongs to the nuclear hormone receptor family. NR3 subfamily. Heteromultimeric cytoplasmic complex with HSP90, HSP70, and FKBP4, in the absence of ligand. After ligand binding, it translocates to the nucleus and binds to DNA as a homodimer and as a heterodimer with NR3C1. Binds the coactivator NCOA2. May interact with HSD11B2 in the absence of ligand. Binds the coactivators NCOA1, TIF1 and NRIP1. Post-translationally, phosphorylated. As to expression, expressed in heart and kidney.

The protein localises to the cytoplasm. It localises to the nucleus. The protein resides in the endoplasmic reticulum membrane. Its function is as follows. Receptor for both mineralocorticoids (MC) such as aldosterone and glucocorticoids (GC) such as corticosterone or cortisol. Binds to mineralocorticoid response elements (MRE) and transactivates target genes. The effect of MC is to increase ion and water transport and thus raise extracellular fluid volume and blood pressure and lower potassium levels. The protein is Mineralocorticoid receptor (Nr3c2) of Mus musculus (Mouse).